Reading from the N-terminus, the 343-residue chain is Anthranilate phosphoribosyltransferase (343 aa).

5-phospho-alpha-D-ribose 1-diphosphate is bound by residues glycine 77, 80–81 (GD), threonine 85, 87–90 (NVST), 105–113 (KHGNRSSSG), and serine 117. An anthranilate-binding site is contributed by glycine 77. Serine 89 lines the Mg(2+) pocket. Position 108 (asparagine 108) interacts with anthranilate. Arginine 163 lines the anthranilate pocket. The Mg(2+) site is built by aspartate 222 and glutamate 223.

It belongs to the anthranilate phosphoribosyltransferase family. As to quaternary structure, homodimer. Requires Mg(2+) as cofactor.

It catalyses the reaction N-(5-phospho-beta-D-ribosyl)anthranilate + diphosphate = 5-phospho-alpha-D-ribose 1-diphosphate + anthranilate. The protein operates within amino-acid biosynthesis; L-tryptophan biosynthesis; L-tryptophan from chorismate: step 2/5. Its function is as follows. Catalyzes the transfer of the phosphoribosyl group of 5-phosphorylribose-1-pyrophosphate (PRPP) to anthranilate to yield N-(5'-phosphoribosyl)-anthranilate (PRA). The polypeptide is Anthranilate phosphoribosyltransferase (Cenarchaeum symbiosum (strain A)).